The following is a 730-amino-acid chain: ATP-binding cassette sub-family D member 1 (730 aa).

4 consecutive transmembrane segments (helical) span residues Ala24–Pro44, Phe137–Val157, Ala169–Ile189, and Ala276–Leu296. Residues Thr136–Met373 form the ABC transmembrane type-1 domain. The ABC transporter domain maps to Ile505 to Gln727. Gly538–Ser545 lines the ATP pocket.

It belongs to the ABC transporter superfamily. ABCD family. Peroxisomal fatty acyl CoA transporter (TC 3.A.1.203) subfamily.

It is found in the peroxisome membrane. It carries out the reaction an acyl-CoA(out) + ATP + H2O = an acyl-CoA(in) + ADP + phosphate + H(+). Its function is as follows. Plays a role in the transport of free very-long-chain fatty acids (VLCFAs) as well as their CoA-esters across the peroxisomal membrane by acting as an ATP-specific binding subunit releasing ADP after ATP hydrolysis. Thus, plays a role in regulation of VLCFAs and energy metabolism namely, in the degradation and biosynthesis of fatty acids by beta-oxidation, mitochondrial function and microsomal fatty acid elongation. The polypeptide is ATP-binding cassette sub-family D member 1 (Drosophila melanogaster (Fruit fly)).